The following is a 210-amino-acid chain: Large ribosomal subunit protein uL4 (210 aa).

A compositionally biased stretch (polar residues) spans 41 to 51 (ANARQGTQSTK). 2 disordered regions span residues 41 to 60 (ANARQGTQSTKTRGEVQGSS) and 67 to 98 (KGTGNARMGTNRSPVRRHGGVAFGPRPRDFSK).

It belongs to the universal ribosomal protein uL4 family. In terms of assembly, part of the 50S ribosomal subunit.

Functionally, one of the primary rRNA binding proteins, this protein initially binds near the 5'-end of the 23S rRNA. It is important during the early stages of 50S assembly. It makes multiple contacts with different domains of the 23S rRNA in the assembled 50S subunit and ribosome. In terms of biological role, forms part of the polypeptide exit tunnel. The sequence is that of Large ribosomal subunit protein uL4 from Dehalococcoides mccartyi (strain ATCC BAA-2266 / KCTC 15142 / 195) (Dehalococcoides ethenogenes (strain 195)).